Here is a 129-residue protein sequence, read N- to C-terminus: Large ribosomal subunit protein eL31 (129 aa).

Residues 1–46 (MSQETTATKQEEQKTSELQQQKKEEQKPQQATTTTKEEKKTKPEKE) form a disordered region. Basic and acidic residues-rich tracts occupy residues 9–27 (KQEE…EEQK) and 35–46 (TKEEKKTKPEKE).

This sequence belongs to the eukaryotic ribosomal protein eL31 family.

The protein is Large ribosomal subunit protein eL31 (rpl31e) of Sulfolobus acidocaldarius (strain ATCC 33909 / DSM 639 / JCM 8929 / NBRC 15157 / NCIMB 11770).